We begin with the raw amino-acid sequence, 488 residues long: Glutamyl-tRNA(Gln) amidotransferase subunit A (488 aa).

Catalysis depends on charge relay system residues K77 and S152. S176 functions as the Acyl-ester intermediate in the catalytic mechanism.

This sequence belongs to the amidase family. GatA subfamily. Heterotrimer of A, B and C subunits.

The catalysed reaction is L-glutamyl-tRNA(Gln) + L-glutamine + ATP + H2O = L-glutaminyl-tRNA(Gln) + L-glutamate + ADP + phosphate + H(+). In terms of biological role, allows the formation of correctly charged Gln-tRNA(Gln) through the transamidation of misacylated Glu-tRNA(Gln) in organisms which lack glutaminyl-tRNA synthetase. The reaction takes place in the presence of glutamine and ATP through an activated gamma-phospho-Glu-tRNA(Gln). This chain is Glutamyl-tRNA(Gln) amidotransferase subunit A, found in Streptococcus mutans serotype c (strain ATCC 700610 / UA159).